A 440-amino-acid chain; its full sequence is Xylose isomerase (440 aa).

Active-site residues include H101 and D104. Residues E232, E268, H271, D296, D307, D309, and D339 each contribute to the Mg(2+) site.

It belongs to the xylose isomerase family. As to quaternary structure, homotetramer. Mg(2+) is required as a cofactor.

The protein localises to the cytoplasm. The catalysed reaction is alpha-D-xylose = alpha-D-xylulofuranose. This chain is Xylose isomerase, found in Escherichia coli O17:K52:H18 (strain UMN026 / ExPEC).